We begin with the raw amino-acid sequence, 254 residues long: 3-deoxy-manno-octulosonate cytidylyltransferase (254 aa).

This sequence belongs to the KdsB family.

Its subcellular location is the cytoplasm. It carries out the reaction 3-deoxy-alpha-D-manno-oct-2-ulosonate + CTP = CMP-3-deoxy-beta-D-manno-octulosonate + diphosphate. Its pathway is nucleotide-sugar biosynthesis; CMP-3-deoxy-D-manno-octulosonate biosynthesis; CMP-3-deoxy-D-manno-octulosonate from 3-deoxy-D-manno-octulosonate and CTP: step 1/1. It functions in the pathway bacterial outer membrane biogenesis; lipopolysaccharide biosynthesis. Functionally, activates KDO (a required 8-carbon sugar) for incorporation into bacterial lipopolysaccharide in Gram-negative bacteria. The sequence is that of 3-deoxy-manno-octulosonate cytidylyltransferase from Pseudomonas fluorescens (strain SBW25).